The following is a 577-amino-acid chain: PTS system lactose-specific EIICB component (577 aa).

The 402-residue stretch at 4–405 (VFDKLKPVFE…VLDVAIYFPF (402 aa)) folds into the PTS EIIC type-3 domain. 9 consecutive transmembrane segments (helical) span residues 27–47 (GFIACMPIIIFSSIFMMVAYV), 63–83 (LMVAYNYSMGLLALFVAGTTA), 100–120 (INPVAVIVASEISFVILSILP), 133–153 (QGLICAYIVGLIVPNIYYVCI), 176–196 (LIPMGLSVTAFWLFGVGFKAA), 219–239 (YLGLALIAGAMAFFWFCGVQG), 280–300 (VMNFGGTGATLVVPFIMLFAA), 326–346 (FGMPIIMNPMLFIPFLATPIV), and 386–406 (LAFVFVLLTLVLDVAIYFPFI). The 102-residue stretch at 476-577 (EVDVLVLCAG…MALDFVESNL (102 aa)) folds into the PTS EIIB type-3 domain. The active-site Phosphocysteine intermediate; for EIIB activity is cysteine 483. A Phosphocysteine; by EIIA modification is found at cysteine 483.

It localises to the cell membrane. The catalysed reaction is lactose(out) + N(pros)-phospho-L-histidyl-[protein] = lactose 6-phosphate(in) + L-histidyl-[protein]. In terms of biological role, the phosphoenolpyruvate-dependent sugar phosphotransferase system (sugar PTS), a major carbohydrate active transport system, catalyzes the phosphorylation of incoming sugar substrates concomitantly with their translocation across the cell membrane. The enzyme II LacEF PTS system is involved in lactose transport. This Lacticaseibacillus casei (Lactobacillus casei) protein is PTS system lactose-specific EIICB component.